The sequence spans 305 residues: Aspartate carbamoyltransferase catalytic subunit (305 aa).

Residues Arg-54 and Thr-55 each coordinate carbamoyl phosphate. Lys-83 lines the L-aspartate pocket. 3 residues coordinate carbamoyl phosphate: Arg-104, His-132, and Gln-135. L-aspartate-binding residues include Arg-165 and Arg-226. Leu-265 and Pro-266 together coordinate carbamoyl phosphate.

The protein belongs to the aspartate/ornithine carbamoyltransferase superfamily. ATCase family. As to quaternary structure, heterooligomer of catalytic and regulatory chains.

The catalysed reaction is carbamoyl phosphate + L-aspartate = N-carbamoyl-L-aspartate + phosphate + H(+). Its pathway is pyrimidine metabolism; UMP biosynthesis via de novo pathway; (S)-dihydroorotate from bicarbonate: step 2/3. In terms of biological role, catalyzes the condensation of carbamoyl phosphate and aspartate to form carbamoyl aspartate and inorganic phosphate, the committed step in the de novo pyrimidine nucleotide biosynthesis pathway. This is Aspartate carbamoyltransferase catalytic subunit from Pyrobaculum calidifontis (strain DSM 21063 / JCM 11548 / VA1).